Here is a 96-residue protein sequence, read N- to C-terminus: Acylphosphatase (96 aa).

In terms of domain architecture, Acylphosphatase-like spans 4-96 (RCEFLIFGKV…ESLNDFEILR (93 aa)). Catalysis depends on residues Arg19 and Asn42.

This sequence belongs to the acylphosphatase family.

It catalyses the reaction an acyl phosphate + H2O = a carboxylate + phosphate + H(+). The polypeptide is Acylphosphatase (acyP) (Helicobacter hepaticus (strain ATCC 51449 / 3B1)).